A 430-amino-acid chain; its full sequence is MTEIDPNINEQEMAEVINSDKDIDSDSNTVGLTLFAQLQNQLRLQQEELLQQQRELLSQESHLQLLQSSHSSISNTWNFTQGLVVGQLSVIFLIIIFVKFFVFADSSSSIPSKFVARDGAGVIVRRDNKSTTSRDRHNGIGGKDSNLEPSTDDERLQNNRAKVSSILEKTYYDVNNHASESLDWFNVLIAQTISHLRTEALLSDNIYHSLSNFLDNSELPDFLDKINLTEIDVGDDFPIFSNCRIKHSKEDTGRLEAKIDVDLSDTLTLGMETKLLLNYPRPLTAILPVAMTVSIVRFSGCLTVSLVNTNDQEFQADQVARPSNGHTSTDNGNDENGKGSSSEDKKGGTALMFSFAPDYRLEFVVKSLIGSRAKLQDVPKISSLIENRLRTWFIERCVEPRFQVVKLPSLWPRTKNTREPAKPKDSDDTL.

The Lumenal portion of the chain corresponds to 1–82 (MTEIDPNINE…ISNTWNFTQG (82 aa)). A helical membrane pass occupies residues 83–103 (LVVGQLSVIFLIIIFVKFFVF). At 104–430 (ADSSSSIPSK…AKPKDSDDTL (327 aa)) the chain is on the cytoplasmic side. Composition is skewed to basic and acidic residues over residues 126 to 138 (RDNK…DRHN) and 335 to 346 (ENGKGSSSEDKK). Disordered stretches follow at residues 126-154 (RDNK…TDDE) and 315-346 (QADQ…EDKK). Positions 178-408 (ASESLDWFNV…EPRFQVVKLP (231 aa)) constitute an SMP-LTD domain.

The protein belongs to the MMM1 family. As to quaternary structure, homodimer. Component of the ER-mitochondria encounter structure (ERMES) or MDM complex, composed of MMM1, MDM10, MDM12 and MDM34. An MMM1 homodimer associates with one molecule of MDM12 on each side in a pairwise head-to-tail manner, and the SMP-LTD domains of MMM1 and MDM12 generate a continuous hydrophobic tunnel for phospholipid trafficking.

Its subcellular location is the endoplasmic reticulum membrane. Functionally, component of the ERMES/MDM complex, which serves as a molecular tether to connect the endoplasmic reticulum (ER) and mitochondria. Components of this complex are involved in the control of mitochondrial shape and protein biogenesis, and function in nonvesicular lipid trafficking between the ER and mitochondria. The MDM12-MMM1 subcomplex functions in the major beta-barrel assembly pathway that is responsible for biogenesis of all outer membrane beta-barrel proteins, and acts in a late step after the SAM complex. The MDM10-MDM12-MMM1 subcomplex further acts in the TOM40-specific pathway after the action of the MDM12-MMM1 complex. Essential for establishing and maintaining the structure of mitochondria and maintenance of mtDNA nucleoids. The sequence is that of Maintenance of mitochondrial morphology protein 1 from Lodderomyces elongisporus (strain ATCC 11503 / CBS 2605 / JCM 1781 / NBRC 1676 / NRRL YB-4239) (Yeast).